Here is a 643-residue protein sequence, read N- to C-terminus: UPF0313 protein CLD_0573 (643 aa).

Residues 295 to 566 enclose the Radical SAM core domain; that stretch reads AIKEVKFSIT…RMQRALLQFS (272 aa). 3 residues coordinate [4Fe-4S] cluster: C309, C313, and C316. A disordered region spans residues 598-643; the sequence is NKPYKKSHKKNNAKNNNNHYNKNNNKNKDISKKNKKNSLSKHKKRK. The segment covering 600 to 609 has biased composition (basic residues); sequence PYKKSHKKNN. Low complexity predominate over residues 610–621; it reads AKNNNNHYNKNN. A compositionally biased stretch (basic residues) spans 630-643; sequence KNKKNSLSKHKKRK.

The protein belongs to the UPF0313 family. [4Fe-4S] cluster serves as cofactor.

This Clostridium botulinum (strain Okra / Type B1) protein is UPF0313 protein CLD_0573.